The chain runs to 362 residues: Endopolygalacturonase II (362 aa).

Residues 1-20 (MHSFASLLRYGLAAGATLAS) form the signal peptide. A propeptide spanning residues 21-27 (ASPIEAR) is cleaved from the precursor. Cys-30 and Cys-45 are disulfide-bonded. The PbH1 1 repeat unit spans residues 156–186 (SDDITLTDITINNADGDSLGGHNTDAFDVGN). Asp-201 (proton donor) is an active-site residue. A disulfide bridge connects residues Cys-203 and Cys-219. 4 PbH1 repeats span residues 209 to 229 (GENI…SIGS), 238 to 259 (VKNV…RIKT), 267 to 289 (VSEI…VIQQ), and 301 to 322 (TNGV…DSKA). His-223 is an active-site residue. Residue Asn-240 is glycosylated (N-linked (GlcNAc...) asparagine). 2 disulfide bridges follow: Cys-329–Cys-334 and Cys-353–Cys-362.

It belongs to the glycosyl hydrolase 28 family.

It is found in the secreted. It catalyses the reaction (1,4-alpha-D-galacturonosyl)n+m + H2O = (1,4-alpha-D-galacturonosyl)n + (1,4-alpha-D-galacturonosyl)m.. In terms of biological role, involved in maceration and soft-rotting of plant tissue. Hydrolyzes the 1,4-alpha glycosidic bonds of de-esterified pectate in the smooth region of the plant cell wall. This Aspergillus awamori (Black koji mold) protein is Endopolygalacturonase II (pgaII).